Consider the following 335-residue polypeptide: Phosphate acyltransferase (335 aa).

This sequence belongs to the PlsX family. In terms of assembly, homodimer. Probably interacts with PlsY.

The protein resides in the cytoplasm. It catalyses the reaction a fatty acyl-[ACP] + phosphate = an acyl phosphate + holo-[ACP]. The protein operates within lipid metabolism; phospholipid metabolism. Functionally, catalyzes the reversible formation of acyl-phosphate (acyl-PO(4)) from acyl-[acyl-carrier-protein] (acyl-ACP). This enzyme utilizes acyl-ACP as fatty acyl donor, but not acyl-CoA. The polypeptide is Phosphate acyltransferase (Streptococcus equi subsp. equi (strain 4047)).